A 202-amino-acid chain; its full sequence is Protein lin-28 homolog A (202 aa).

2 disordered regions span residues 1 to 33 (MPPANPHLNHTGGCTKTEEEEAASSEEDSGSFH) and 100 to 128 (SLQVTGPGGAPCVGSEKKPKGTQKRRSKG). The segment covering 18-29 (EEEEAASSEEDS) has biased composition (acidic residues). Residues 33–106 (HGSGVCKWFN…GLESLQVTGP (74 aa)) enclose the CSD domain. Positions 107 to 130 (GGAPCVGSEKKPKGTQKRRSKGDR) are flexible linker. 2 consecutive CCHC-type zinc fingers follow at residues 129 to 146 (DRCFNCGGPNHHAKECQL) and 151 to 168 (KKCHFCQSISHMVANCPI). The Zn(2+) site is built by Cys-131, Cys-134, His-139, Cys-144, Cys-153, Cys-156, His-161, and Cys-166. Residues 170 to 202 (AQQLSPGSQGKSTTSTGEEEDMSHTPLLPESTD) are disordered. The segment covering 171–185 (QQLSPGSQGKSTTST) has biased composition (polar residues). Ser-174 bears the Phosphoserine mark.

The protein belongs to the lin-28 family. Monomer.

It localises to the cytoplasm. The protein localises to the rough endoplasmic reticulum. It is found in the P-body. The protein resides in the stress granule. Its subcellular location is the nucleus. It localises to the nucleolus. In terms of biological role, RNA-binding protein that inhibits processing of pre-let-7 miRNAs and regulates translation of mRNAs that control developmental timing, pluripotency and metabolism. Seems to recognize a common structural G-quartet (G4) feature in its miRNA and mRNA targets. 'Translational enhancer' that drives specific mRNAs to polysomes and increases the efficiency of protein synthesis. Its association with the translational machinery and target mRNAs results in an increased number of initiation events per molecule of mRNA and, indirectly, in mRNA stabilization. Suppressor of microRNA (miRNA) biogenesis, including that of let-7. Binds specific target miRNA precursors (pre-miRNAs), recognizing an 5'-GGAG-3' motif found in their terminal loop, and recruits uridylyltransferase. This results in the terminal uridylation of target pre-miRNAs. Uridylated pre-miRNAs fail to be processed by Dicer and undergo degradation. Localized to the periendoplasmic reticulum area, binds to a large number of spliced mRNAs and inhibits the translation of mRNAs destined for the ER, reducing the synthesis of transmembrane proteins, ER or Golgi lumen proteins, and secretory proteins. Binds to and enhances the translation of mRNAs for several metabolic enzymes, increasing glycolysis and oxidative phosphorylation. Which, with the let-7 repression may enhance tissue repair in adult tissue. This Danio rerio (Zebrafish) protein is Protein lin-28 homolog A (lin28a).